The sequence spans 62 residues: Large ribosomal subunit protein uL30 (62 aa).

It belongs to the universal ribosomal protein uL30 family. In terms of assembly, part of the 50S ribosomal subunit.

This is Large ribosomal subunit protein uL30 from Geobacillus thermodenitrificans (strain NG80-2).